Consider the following 203-residue polypeptide: dITP/XTP pyrophosphatase (203 aa).

8–13 (TANKGK) lines the substrate pocket. Mg(2+) is bound by residues E41 and D70. Catalysis depends on D70, which acts as the Proton acceptor. Substrate-binding positions include S71, 153–156 (FGYD), K176, and 181–182 (HR).

This sequence belongs to the HAM1 NTPase family. Homodimer. Mg(2+) is required as a cofactor.

The catalysed reaction is XTP + H2O = XMP + diphosphate + H(+). It catalyses the reaction dITP + H2O = dIMP + diphosphate + H(+). The enzyme catalyses ITP + H2O = IMP + diphosphate + H(+). In terms of biological role, pyrophosphatase that catalyzes the hydrolysis of nucleoside triphosphates to their monophosphate derivatives, with a high preference for the non-canonical purine nucleotides XTP (xanthosine triphosphate), dITP (deoxyinosine triphosphate) and ITP. Seems to function as a house-cleaning enzyme that removes non-canonical purine nucleotides from the nucleotide pool, thus preventing their incorporation into DNA/RNA and avoiding chromosomal lesions. The sequence is that of dITP/XTP pyrophosphatase from Listeria monocytogenes serotype 4b (strain F2365).